The sequence spans 264 residues: Dehydrodolichyl diphosphate synthase complex subunit SPAC4D7.04c (264 aa).

It belongs to the UPP synthase family. As to quaternary structure, forms an active dehydrodolichyl diphosphate synthase complex with nus1. The cofactor is Mg(2+).

The protein localises to the endoplasmic reticulum membrane. It catalyses the reaction n isopentenyl diphosphate + (2E,6E)-farnesyl diphosphate = a di-trans,poly-cis-polyprenyl diphosphate + n diphosphate. Its pathway is protein modification; protein glycosylation. In terms of biological role, with nus1, forms the dehydrodolichyl diphosphate synthase (DDS) complex, an essential component of the dolichol monophosphate (Dol-P) biosynthetic machinery. Adds multiple copies of isopentenyl pyrophosphate (IPP) to farnesyl pyrophosphate (FPP) to produce dehydrodolichyl diphosphate (Dedol-PP), a precursor of dolichol which is utilized as a sugar carrier in protein glycosylation in the endoplasmic reticulum (ER). The sequence is that of Dehydrodolichyl diphosphate synthase complex subunit SPAC4D7.04c from Schizosaccharomyces pombe (strain 972 / ATCC 24843) (Fission yeast).